The chain runs to 223 residues: Octanoyltransferase (223 aa).

A BPL/LPL catalytic domain is found at 35 to 214 (GEARELIWLL…HFPAMLAGLR (180 aa)). Residues 74–81 (RGGRYTYH), 145–147 (AIG), and 158–160 (GFS) contribute to the substrate site. Cysteine 176 (acyl-thioester intermediate) is an active-site residue.

It belongs to the LipB family.

It is found in the cytoplasm. The catalysed reaction is octanoyl-[ACP] + L-lysyl-[protein] = N(6)-octanoyl-L-lysyl-[protein] + holo-[ACP] + H(+). Its pathway is protein modification; protein lipoylation via endogenous pathway; protein N(6)-(lipoyl)lysine from octanoyl-[acyl-carrier-protein]: step 1/2. Functionally, catalyzes the transfer of endogenously produced octanoic acid from octanoyl-acyl-carrier-protein onto the lipoyl domains of lipoate-dependent enzymes. Lipoyl-ACP can also act as a substrate although octanoyl-ACP is likely to be the physiological substrate. The sequence is that of Octanoyltransferase from Rhizorhabdus wittichii (strain DSM 6014 / CCUG 31198 / JCM 15750 / NBRC 105917 / EY 4224 / RW1) (Sphingomonas wittichii).